The chain runs to 243 residues: MTQHDTIFSKPLPSISDFCFDQQVVEVFPDMINRSVPGYSSILQTLPQIVSRYVQPNSHLYDLGCSLGAATLAIRKGCEQTENCKIIGIDNSQPMIERAQLHLDGFKSQIPVELHCQDLAETEIKNASVVVLNFTLQFISQDKRDEVIQNIFNGMNKGGALLVAEKVRHPDESMNDLLIELHHNFKRANGYSELEISQKRAAIENVMKVDTLQAHQQRFQKAGFQHSSVWFQCFNFAAMLAVK.

S-adenosyl-L-methionine is bound by residues tyrosine 39, 64–66 (GCS), 90–91 (DN), 118–119 (DL), asparagine 133, and arginine 200.

This sequence belongs to the class I-like SAM-binding methyltransferase superfamily. Cx-SAM synthase family. In terms of assembly, homodimer.

It carries out the reaction prephenate + S-adenosyl-L-methionine = carboxy-S-adenosyl-L-methionine + 3-phenylpyruvate + H2O. Catalyzes the conversion of S-adenosyl-L-methionine (SAM) to carboxy-S-adenosyl-L-methionine (Cx-SAM). The sequence is that of Carboxy-S-adenosyl-L-methionine synthase from Idiomarina loihiensis (strain ATCC BAA-735 / DSM 15497 / L2-TR).